The chain runs to 438 residues: MPNFIDRRLNPKDKSLGNRQRFLKRAREELKRAIKEQVKSGKITDVDAEHNVSMPARGVSEPTFQPAGDSGERQYVLPGNREFAAGDRLPKRSSGGGATGAGAGTGQSQDEFQFVLSREEVLDLFFEDLELPDMVKLNLKESVAFKRRRAGFAATGSPMNINVGRTMRNSFGRRIALHRPGRKEMEAIAEEIARLEVEPNAGAKHLQHLEELRQKLEKLERRRRRIPYVDPVDIRFNRFEQQPLPNASAVMFCLMDVSASMGEREKDLAKRFFVLLHLFLKRRYDRIDIVFIRHTDEAGEVDENTFFYSKQSGGTIVSTALEEMLRVIRERYPAREWNIYAAQASDGENISGDSERCASLLHDDLMRLCQYYAYVEIIDERETEIFGTTDNGTSLWRAYRTVDGEWPNFQMTRIAKPADIYPVFRKLFGKQPAVQVRK.

Positions 1 to 16 (MPNFIDRRLNPKDKSL) are enriched in basic and acidic residues. Disordered regions lie at residues 1-20 (MPNFIDRRLNPKDKSLGNRQ) and 83-107 (FAAGDRLPKRSSGGGATGAGAGTGQ). The segment covering 94–105 (SGGGATGAGAGT) has biased composition (gly residues).

This sequence belongs to the UPF0229 family.

The protein is UPF0229 protein NGR_c12350 of Sinorhizobium fredii (strain NBRC 101917 / NGR234).